Consider the following 444-residue polypeptide: Glutamate-1-semialdehyde 2,1-aminomutase (444 aa).

Lys-267 carries the N6-(pyridoxal phosphate)lysine modification.

Belongs to the class-III pyridoxal-phosphate-dependent aminotransferase family. HemL subfamily. Homodimer. It depends on pyridoxal 5'-phosphate as a cofactor.

It is found in the cytoplasm. It catalyses the reaction (S)-4-amino-5-oxopentanoate = 5-aminolevulinate. Its pathway is porphyrin-containing compound metabolism; protoporphyrin-IX biosynthesis; 5-aminolevulinate from L-glutamyl-tRNA(Glu): step 2/2. This Xylella fastidiosa (strain 9a5c) protein is Glutamate-1-semialdehyde 2,1-aminomutase.